The primary structure comprises 1161 residues: Lateral signaling target protein 2 homolog (1161 aa).

Disordered stretches follow at residues 417 to 510 (ATGS…EVDD), 583 to 831 (AAGS…PTQS), 890 to 918 (MNSS…HNHP), 935 to 978 (DQQN…SVES), 992 to 1014 (SSPV…TGQE), and 1029 to 1095 (GKAS…EPPR). Residues 419–429 (GSSGFGSGRGG) are compositionally biased toward gly residues. Residues 438–453 (PKQRHNQAHLRQRGAP) show a composition bias toward basic residues. Residues 468 to 487 (GDDREPVVEEDNNNHLRKEI) show a composition bias toward basic and acidic residues. Residues 488-510 (EEEDVDDDMEEEEEDEEEDEVDD) are compositionally biased toward acidic residues. The span at 583 to 601 (AAGSGGQQQQQQQQQLIDS) shows a compositional bias: low complexity. Residues 669 to 704 (SDYEEADVDDEPDDVDADDDDEEEDDVVGEVEEQND) are compositionally biased toward acidic residues. The span at 728–742 (KAARNHRKSSHHRPR) shows a compositional bias: basic residues. Residues 743 to 757 (PSTSSSSSSAAYRNK) are compositionally biased toward low complexity. Over residues 758–773 (SQSHQHHHHHHHHHHH) the composition is skewed to basic residues. Composition is skewed to low complexity over residues 781-800 (GTSS…SNGS) and 807-831 (MQQQ…PTQS). Positions 896–910 (EPDEPPEPSGSEEES) are enriched in acidic residues. Composition is skewed to polar residues over residues 935–948 (DQQN…QSIY) and 956–967 (EQDSVFGSSGDS). Over residues 996-1010 (GAGGAGGGGMVGGSR) the composition is skewed to gly residues. The span at 1054–1065 (SRSSPSSPVNSN) shows a compositional bias: low complexity. Over residues 1081 to 1094 (TAHEQQRRMPEEPP) the composition is skewed to basic and acidic residues. The segment at 1099-1159 (DCDAPRCMAC…VCRDCYIHEV (61 aa)) adopts an FYVE-type zinc-finger fold. Residues Cys1105, Cys1108, Cys1121, Cys1124, Cys1129, Cys1132, Cys1151, and Cys1154 each coordinate Zn(2+).

This sequence belongs to the lst-2 family.

Functionally, negative regulator of epidermal growth factor receptor (EGFR) signaling. The protein is Lateral signaling target protein 2 homolog of Anopheles gambiae (African malaria mosquito).